Here is a 2894-residue protein sequence, read N- to C-terminus: Bifunctional DNA-directed RNA polymerase subunit beta-beta' (2894 aa).

The tract at residues 1-1378 (MANFTKLKNR…DVNIYGDEQD (1378 aa)) is DNA-directed RNA polymerase subunit beta. The segment at 1385–2894 (PIAIKEDERP…QEEYEEDEEE (1510 aa)) is DNA-directed RNA polymerase subunit beta'. 4 residues coordinate Zn(2+): Cys1450, Cys1452, Cys1465, and Cys1468. Mg(2+)-binding residues include Asp1849, Asp1851, and Asp1853. Residues Cys2179, Cys2253, Cys2260, and Cys2263 each contribute to the Zn(2+) site.

This sequence in the N-terminal section; belongs to the RNA polymerase beta chain family. The protein in the C-terminal section; belongs to the RNA polymerase beta' chain family. As to quaternary structure, the RNAP catalytic core consists of 2 alpha, 1 beta/beta' and 1 omega subunit. When a sigma factor is associated with the core the holoenzyme is formed, which can initiate transcription. Mg(2+) is required as a cofactor. Requires Zn(2+) as cofactor.

It carries out the reaction RNA(n) + a ribonucleoside 5'-triphosphate = RNA(n+1) + diphosphate. In terms of biological role, DNA-dependent RNA polymerase catalyzes the transcription of DNA into RNA using the four ribonucleoside triphosphates as substrates. The protein is Bifunctional DNA-directed RNA polymerase subunit beta-beta' (rpoBC) of Helicobacter hepaticus (strain ATCC 51449 / 3B1).